Reading from the N-terminus, the 365-residue chain is Gibberellin 20 oxidase 1-B (365 aa).

Residues 199-299 (GNDSIMRLNY…RKSLAFFLCP (101 aa)) form the Fe2OG dioxygenase domain. Fe cation-binding residues include histidine 224, aspartate 226, and histidine 280. The active site involves arginine 290.

Belongs to the iron/ascorbate-dependent oxidoreductase family. GA20OX subfamily. Requires Fe cation as cofactor. It depends on L-ascorbate as a cofactor. As to expression, not detected in nodes and the ear of the elongating stem.

It carries out the reaction gibberellin A12 + 2 2-oxoglutarate + 3 O2 + H(+) = gibberellin A9 + 2 succinate + 3 CO2 + 2 H2O. The catalysed reaction is gibberellin A53 + 2 2-oxoglutarate + 3 O2 + H(+) = gibberellin A20 + 2 succinate + 3 CO2 + 2 H2O. Key oxidase enzyme in the biosynthesis of gibberellin that catalyzes the conversion of GA12 and GA53 to GA9 and GA20 respectively, via a three-step oxidation at C-20 of the GA skeleton. This is Gibberellin 20 oxidase 1-B (GA20ox1B) from Triticum aestivum (Wheat).